Consider the following 456-residue polypeptide: E3 ubiquitin-protein ligase RNF25 (456 aa).

Residues 18–127 enclose the RWD domain; that stretch reads SEVEVLESIY…EKGKEILTDN (110 aa). Cys134, Cys137, Cys152, His154, His157, Cys160, Cys195, and Cys198 together coordinate Zn(2+). An RING-type zinc finger spans residues 134–199; that stretch reads CVICLYGFQE…AVGVQCPVCR (66 aa). A disordered region spans residues 269-456; that stretch reads LEPESAVDVS…PLGLESEEGS (188 aa). Residues 288–332 are compositionally biased toward polar residues; the sequence is SAEQSTSLADQSTLPTSLPMTTQYTYEKTSGAGPNQQRPGETQKS. Composition is skewed to basic and acidic residues over residues 364-388 and 410-421; these read SEIH…EPRN and RTRDCARWERSK.

The protein belongs to the RNF25 family. Interacts with UBE2D2, and may also interact with UBE2E1 and UBE2E3. Interacts with RELA/p65. Ubiquitinated; autoubiquitinated. As to expression, ubiquitous.

It localises to the cytoplasm. The catalysed reaction is S-ubiquitinyl-[E2 ubiquitin-conjugating enzyme]-L-cysteine + [acceptor protein]-L-lysine = [E2 ubiquitin-conjugating enzyme]-L-cysteine + N(6)-ubiquitinyl-[acceptor protein]-L-lysine.. It participates in protein modification; protein ubiquitination. Functionally, E3 ubiquitin-protein ligase that plays a key role in the RNF14-RNF25 translation quality control pathway, a pathway that takes place when a ribosome has stalled during translation, and which promotes ubiquitination and degradation of translation factors on stalled ribosomes. Catalyzes ubiquitination of RPS27A in response to ribosome collisions, promoting activation of RNF14. RNF25 catalyzes ubiquitination of other ribosomal proteins on stalled ribosomes, such as RPL0, RPL1, RPL12, RPS13 and RPS17. Also involved in ubiquitination and degradation of stalled ETF1/eRF1. Independently of its function in the response to stalled ribosomes, mediates ubiquitination and subsequent proteasomal degradation of NKD2. May also stimulate transcription mediated by NF-kappa-B via its interaction with RELA/p65. In Mus musculus (Mouse), this protein is E3 ubiquitin-protein ligase RNF25.